Reading from the N-terminus, the 139-residue chain is Large ribosomal subunit protein bL17 (139 aa).

The interval D117–G139 is disordered.

This sequence belongs to the bacterial ribosomal protein bL17 family. In terms of assembly, part of the 50S ribosomal subunit. Contacts protein L32.

This Rhodospirillum centenum (strain ATCC 51521 / SW) protein is Large ribosomal subunit protein bL17.